Reading from the N-terminus, the 286-residue chain is Meteorin-like protein (286 aa).

An N-terminal signal peptide occupies residues 1–20 (MLRRGLLSFFMVILIDRGTS). Disulfide bonds link C28–C51, C84–C120, C165–C235, C168–C259, and C178–C281. N203 carries N-linked (GlcNAc...) asparagine glycosylation.

This sequence belongs to the meteorin family.

It localises to the secreted. Hormone induced following exercise or cold exposure that promotes energy expenditure. Induced either in the skeletal muscle after exercise or in adipose tissue following cold exposure and is present in the circulation. Able to stimulate energy expenditure associated with the browning of the white fat depots and improves glucose tolerance. The chain is Meteorin-like protein (metrnl) from Xenopus laevis (African clawed frog).